The following is a 322-amino-acid chain: GATA transcription factor 8 (322 aa).

A disordered region spans residues 93-168 (TLVEKKEDSF…DKDRVKDNVC (76 aa)). Positions 102-141 (FSTNTDSSSSHSQFRSSSPVSVLESSSSSSQTTNTTSLVL) are enriched in low complexity. Positions 144-154 (KHGRPRTKRPR) are enriched in basic residues. Residues 147-154 (RPRTKRPR) carry the Nuclear localization signal motif. The GATA-type zinc-finger motif lies at 225–279 (QYPLRKCMHCEVTKTPQWRLGPMGPKTLCNACGVRYKSGRLFPEYRPAASPTFTP).

It belongs to the type IV zinc-finger family. Class A subfamily.

The protein localises to the nucleus. In terms of biological role, transcriptional activator that specifically binds 5'-GATA-3' or 5'-GAT-3' motifs within gene promoters. May be involved in the regulation of some light-responsive genes. This chain is GATA transcription factor 8 (GATA8), found in Arabidopsis thaliana (Mouse-ear cress).